A 46-amino-acid polypeptide reads, in one-letter code: Denclatoxin-B (46 aa).

3 disulfides stabilise this stretch: Cys3-Cys40, Cys4-Cys32, and Cys16-Cys26.

Belongs to the plant thionin (TC 1.C.44) family.

The protein resides in the secreted. Thionins are small plant proteins which are toxic to animal cells. They seem to exert their toxic effect at the level of the cell membrane. Their precise function is not known. The protein is Denclatoxin-B of Dendrophthora clavata (Columbian mistletoe).